Reading from the N-terminus, the 223-residue chain is Ribonuclease T (223 aa).

In terms of domain architecture, Exonuclease spans 20–194; sequence VVIDVETAGF…YDTEQTALLF (175 aa). Mg(2+) is bound by residues aspartate 23, glutamate 25, histidine 181, and aspartate 186. The active-site Proton donor/acceptor is the histidine 181.

The protein belongs to the RNase T family. In terms of assembly, homodimer. Mg(2+) serves as cofactor.

Functionally, trims short 3' overhangs of a variety of RNA species, leaving a one or two nucleotide 3' overhang. Responsible for the end-turnover of tRNA: specifically removes the terminal AMP residue from uncharged tRNA (tRNA-C-C-A). Also appears to be involved in tRNA biosynthesis. In Cronobacter sakazakii (strain ATCC BAA-894) (Enterobacter sakazakii), this protein is Ribonuclease T.